Reading from the N-terminus, the 473-residue chain is Deoxyribodipyrimidine photo-lyase (473 aa).

Positions 2 to 134 (PTHLVWFRRD…ICEGFDDSVI (133 aa)) constitute a Photolyase/cryptochrome alpha/beta domain. Residues Asn-109 and Glu-110 each contribute to the (6R)-5,10-methylene-5,6,7,8-tetrahydrofolate site. Tyr-224 contributes to the FAD binding site. Residue Arg-228 participates in DNA binding. 236–240 (TSRLS) is a binding site for FAD. Interaction with DNA stretches follow at residues 276–283 (ELIWREFY) and 343–344 (NR). Residue 374 to 376 (DGD) participates in FAD binding. Gln-406 provides a ligand contact to DNA.

This sequence belongs to the DNA photolyase class-1 family. As to quaternary structure, monomer. The cofactor is FAD. Requires (6R)-5,10-methylene-5,6,7,8-tetrahydrofolate as cofactor.

It carries out the reaction cyclobutadipyrimidine (in DNA) = 2 pyrimidine residues (in DNA).. Functionally, involved in repair of UV radiation-induced DNA damage. Catalyzes the light-dependent monomerization (300-600 nm) of cyclobutyl pyrimidine dimers (in cis-syn configuration), which are formed between adjacent bases on the same DNA strand upon exposure to ultraviolet radiation. The protein is Deoxyribodipyrimidine photo-lyase (phrB) of Salmonella typhimurium (strain LT2 / SGSC1412 / ATCC 700720).